The chain runs to 453 residues: Pup--protein ligase (453 aa).

Glutamate 9 serves as a coordination point for Mg(2+). Arginine 53 contacts ATP. Tyrosine 55 contributes to the Mg(2+) binding site. Residue aspartate 57 is the Proton acceptor of the active site. A Mg(2+)-binding site is contributed by glutamate 63. The ATP site is built by threonine 66 and tryptophan 420.

It belongs to the Pup ligase/Pup deamidase family. Pup-conjugating enzyme subfamily.

The enzyme catalyses ATP + [prokaryotic ubiquitin-like protein]-L-glutamate + [protein]-L-lysine = ADP + phosphate + N(6)-([prokaryotic ubiquitin-like protein]-gamma-L-glutamyl)-[protein]-L-lysine.. Its pathway is protein degradation; proteasomal Pup-dependent pathway. It functions in the pathway protein modification; protein pupylation. Functionally, catalyzes the covalent attachment of the prokaryotic ubiquitin-like protein modifier Pup to the proteasomal substrate proteins, thereby targeting them for proteasomal degradation. This tagging system is termed pupylation. The ligation reaction involves the side-chain carboxylate of the C-terminal glutamate of Pup and the side-chain amino group of a substrate lysine. The protein is Pup--protein ligase of Streptomyces scabiei (strain 87.22).